Reading from the N-terminus, the 374-residue chain is Resuscitation-promoting factor Rpf2 (374 aa).

A signal peptide spans 1–40 (MAPHQKSRINRINSTRSVPLRLATGGVLATLLIGGVTAAA). Residues 210–290 (IDRVDNTEIT…PATISRGTKT (81 aa)) form the G5 domain. A disordered region spans residues 228–252 (PTYVDDPEAPAGDETVVEEGAPGTK).

Belongs to the transglycosylase family. Rpf subfamily. Post-translationally, glycosylated; by Pmt, by at least mannose and galactose. Other unidentified sugars may also be present. In terms of processing, may be subject to proteolytic cleavage as multiple shorter forms are detected in gels. At least 3 non-glycosylated protein isoforms of 35, 40 and 42 kDa are seen in gels.

It is found in the secreted. The protein localises to the cell surface. In terms of biological role, factor that stimulates resuscitation of dormant cells. Has peptidoglycan (PG) hydrolytic activity. Active in the pM concentration range. Has little to no effect on actively-growing cells. PG fragments could either directly activate the resuscitation pathway of dormant bacteria or serve as a substrate for endogenous Rpf, resulting in low molecular weight products with resuscitation activity. This chain is Resuscitation-promoting factor Rpf2 (rpf2), found in Corynebacterium glutamicum (strain ATCC 13032 / DSM 20300 / JCM 1318 / BCRC 11384 / CCUG 27702 / LMG 3730 / NBRC 12168 / NCIMB 10025 / NRRL B-2784 / 534).